We begin with the raw amino-acid sequence, 448 residues long: Mitochondrial distribution and morphology protein 10 (448 aa).

It belongs to the MDM10 family. Component of the ER-mitochondria encounter structure (ERMES) or MDM complex, composed of MMM1, MDM10, MDM12 and MDM34. Associates with the mitochondrial outer membrane sorting assembly machinery SAM(core) complex.

Its subcellular location is the mitochondrion outer membrane. Component of the ERMES/MDM complex, which serves as a molecular tether to connect the endoplasmic reticulum and mitochondria. Components of this complex are involved in the control of mitochondrial shape and protein biogenesis and may function in phospholipid exchange. MDM10 is involved in the late assembly steps of the general translocase of the mitochondrial outer membrane (TOM complex). Functions in the TOM40-specific route of the assembly of outer membrane beta-barrel proteins, including the association of TOM40 with the receptor TOM22 and small TOM proteins. Can associate with the SAM(core) complex as well as the MDM12-MMM1 complex, both involved in late steps of the major beta-barrel assembly pathway, that is responsible for biogenesis of all outer membrane beta-barrel proteins. May act as a switch that shuttles between both complexes and channels precursor proteins into the TOM40-specific pathway. Plays a role in mitochondrial morphology and in the inheritance of mitochondria. The protein is Mitochondrial distribution and morphology protein 10 of Zygosaccharomyces rouxii (strain ATCC 2623 / CBS 732 / NBRC 1130 / NCYC 568 / NRRL Y-229).